The primary structure comprises 293 residues: Pyridoxal 5'-phosphate synthase subunit PdxS (293 aa).

Residue aspartate 23 coordinates D-ribose 5-phosphate. The active-site Schiff-base intermediate with D-ribose 5-phosphate is lysine 80. Glycine 152 serves as a coordination point for D-ribose 5-phosphate. Arginine 164 contacts D-glyceraldehyde 3-phosphate. Residues glycine 213 and 234–235 (GS) contribute to the D-ribose 5-phosphate site.

It belongs to the PdxS/SNZ family. As to quaternary structure, in the presence of PdxT, forms a dodecamer of heterodimers.

It catalyses the reaction aldehydo-D-ribose 5-phosphate + D-glyceraldehyde 3-phosphate + L-glutamine = pyridoxal 5'-phosphate + L-glutamate + phosphate + 3 H2O + H(+). It participates in cofactor biosynthesis; pyridoxal 5'-phosphate biosynthesis. Functionally, catalyzes the formation of pyridoxal 5'-phosphate from ribose 5-phosphate (RBP), glyceraldehyde 3-phosphate (G3P) and ammonia. The ammonia is provided by the PdxT subunit. Can also use ribulose 5-phosphate and dihydroxyacetone phosphate as substrates, resulting from enzyme-catalyzed isomerization of RBP and G3P, respectively. This chain is Pyridoxal 5'-phosphate synthase subunit PdxS, found in Niallia circulans (Bacillus circulans).